Consider the following 201-residue polypeptide: MELVMKDAKSALEVSETTFGREFNEALVHQVVVAYAAGARQGTRAQLTRSEVSGGGKKPWRQKGTGRARAGSIRSPIWRSGGVTFAAKPQDHSQKVNKKMYRGAIRSILSELVRQERLIVVEKFGIEAPKTKELIAKLKEMELTDVLIVTAEVDENLFLAARNLYKVDVRDVAGIDPVSLIAFDKVLMTADAVKQIEEMLA.

The disordered stretch occupies residues 45–66 (AQLTRSEVSGGGKKPWRQKGTG).

Belongs to the universal ribosomal protein uL4 family. In terms of assembly, part of the 50S ribosomal subunit.

Functionally, one of the primary rRNA binding proteins, this protein initially binds near the 5'-end of the 23S rRNA. It is important during the early stages of 50S assembly. It makes multiple contacts with different domains of the 23S rRNA in the assembled 50S subunit and ribosome. In terms of biological role, forms part of the polypeptide exit tunnel. This chain is Large ribosomal subunit protein uL4, found in Aeromonas hydrophila subsp. hydrophila (strain ATCC 7966 / DSM 30187 / BCRC 13018 / CCUG 14551 / JCM 1027 / KCTC 2358 / NCIMB 9240 / NCTC 8049).